The chain runs to 400 residues: Large envelope protein (400 aa).

At Met-1 the chain carries N-acetylmethionine. 3 disordered regions span residues 1–53 (MGGW…DHWP), 88–118 (VPVA…SHPQ), and 145–169 (GSSS…SRTG). Gly-2 carries N-myristoyl glycine; by host lipidation. The interval 2–119 (GGWSSKPRQG…PPLRDSHPQA (118 aa)) is pre-S1. The segment at 2-174 (GGWSSKPRQG…SSRTGDPAPN (173 aa)) is pre-S. Residues 2–181 (GGWSSKPRQG…APNMENTTSG (180 aa)) are Virion surface; in external conformation-facing. The Intravirion; in internal conformation portion of the chain corresponds to 2 to 253 (GGWSSKPRQG…PGYRWMCLRR (252 aa)). An N-linked (GlcNAc...) asparagine glycan is attached at Trp-4. Over residues 96 to 106 (STNRQSGRQPT) the composition is skewed to polar residues. Residues 120–174 (MQWNSTTFHQALLDPRVRGLYFPAGGSSSGTVNPVPTTASPISSISSRTGDPAPN) form a pre-S2 region. Over residues 155–166 (PTTASPISSISS) the composition is skewed to low complexity. A helical transmembrane segment spans residues 182-202 (FLGPLLVLQAGFFLLTRILTI). The Intravirion; in external conformation segment spans residues 203–253 (PQSLDSWWTSLNFLGGAPTCPGQNSQSPTSNHSPTSCPPICPGYRWMCLRR). Residues 254 to 274 (FIIFLFILLLCLIFLLVLLDY) traverse the membrane as a helical segment. The Virion surface segment spans residues 275 to 348 (QGMLPVCPLL…GASVRFSWLS (74 aa)). Asn-320 carries an N-linked (GlcNAc...) asparagine; by host glycan. Residues 349-369 (LLVPFVQWFVGLSPTVWLSVI) form a helical membrane-spanning segment. Residues 370–375 (WMMWYW) lie on the Intravirion side of the membrane. Residues 376-398 (GPSLYNILSPFLPLLPIFFCLWV) traverse the membrane as a helical segment. Residues 399-400 (YI) lie on the Virion surface side of the membrane.

It belongs to the orthohepadnavirus major surface antigen family. As to quaternary structure, in its internal form (Li-HBsAg), interacts with the capsid protein and with the isoform S. Interacts with host chaperone CANX. Associates with host chaperone CANX through its pre-S2 N glycan; this association may be essential for isoform M proper secretion. In terms of assembly, interacts with isoform L. Interacts with the antigens of satellite virus HDV (HDVAgs); this interaction is required for encapsidation of HDV genomic RNA. In terms of processing, isoform M is N-terminally acetylated by host at a ratio of 90%, and N-glycosylated by host at the pre-S2 region. Post-translationally, myristoylated.

The protein localises to the virion membrane. In terms of biological role, the large envelope protein exists in two topological conformations, one which is termed 'external' or Le-HBsAg and the other 'internal' or Li-HBsAg. In its external conformation the protein attaches the virus to cell receptors and thereby initiating infection. This interaction determines the species specificity and liver tropism. This attachment induces virion internalization predominantly through caveolin-mediated endocytosis. The large envelope protein also assures fusion between virion membrane and endosomal membrane. In its internal conformation the protein plays a role in virion morphogenesis and mediates the contact with the nucleocapsid like a matrix protein. Functionally, the middle envelope protein plays an important role in the budding of the virion. It is involved in the induction of budding in a nucleocapsid independent way. In this process the majority of envelope proteins bud to form subviral lipoprotein particles of 22 nm of diameter that do not contain a nucleocapsid. The polypeptide is Large envelope protein (Hepatitis B virus genotype C subtype adr (strain Japan/adr4/1983) (HBV-C)).